Reading from the N-terminus, the 1406-residue chain is MRRLPLLPPCPLLLLLLLPAEVRCTTACTDDCSLKNVTEEMGTSSNDELSVNATSGNRRLSEDVSLPGRAMSDQNSVAQPRAVLDLKTEYVGVTSVNLTWTVNDTASDSYTYRIEVRNGSSINNKTSDITDAEITGLIPGTLYTFTVFAVAADGQTAGEGASISLYTKPSPVLDLKAEYVGVTSVNLTWTVNDTASASYTYRIEVTSDSSIDSLTSSVTMAEITGLIPGTLYSFKVFAVAADNRTEADGASISLYTKPSPVLDLKAEYVGVTSVNLTWTVNGTALTAYTYRIEVRNATSIRNETSNINKIEITGLIPGTSYNFKVFATPVNNTTEEEGLSLNLYTKPSPVLRVVTEYVGVTSVNLTWMVDDTASDSYTYRIEVRNGSSINNKTSDITDAEITGLIPGTLYTFTVFAVAADGQTAGEGASISLYTKPSPVLDLKAEYVGVTSVNLTWTVNDTASASYTYRIEVTSDSSIDSLTSNVTMAEITGLIPGTLYNFTVFAVAADNRTEADGAFTSLYTKPTPVTDLKAEHGVTSVSLNWMVNDTASDSYTYRIEVRNGHSVNNKTSNIPETEITGLNPGTLYTFTVFAVAADGETEGEGASISVYTKPRAVLHLKTEYVGVTSVNLTWTVNDTDSASYTYRIEVRNGSSINNKTSDITDAEITGLDPGTLYIFTVFAVAADGQTAGEGASISLYTKPSMVLNLKAEYVTMTSVNLTWMVNDAESASYTYRIEVAHESLINETMSNVTKSIVTYLIPGTSYNFTVFAIAADNQTEGEGASISQNTVPSSVNAFQCEAVANMSYLTLKWNCPYGGYSGFDIEIFNGTWTKKQQSQFCGREGSEEIFKTEPLDYYKTYTVSVTTVSDGLTSLPVQKICKTSITDPPVPNKAPLVKAVSHNSLSVEFPDFESVNGPLKAYAVMIVTEAEGCLPSKSDLDYTYNDFKQKMTATYVTYVIDVEEISSSSHSQNGHNIVDVGKGNTMYGYENGPLIPLHSYRASVAGFTNINFTVANKIMGEQSYVSFSPCSEVVSLPQDPGVIAGAVIGCLLAILAVVAIGGYIFWRRRRKDKRNTEVSFSPIKIKKSKMIKVENFESYFKKQQADSNCGFAEEYEELKSAGVHQPKFAAEIAENRGKNRYNNVLPYDISRVKLSNPSCTTDDYINANYMPGYSSKKAFIAAQGPLPNTIEDFWRMIWEKNIYSIVMLTKCVEQARTKCEQYWPDKQSKSYGDIIVTMVSEVVLPEWTIRDFNVENADTMESHTVRQFHFTSWPDHGVPETTDLLINFRHLVHEYSSQNPIDSPILVHCSAGVGRTGTFIAIDRLIQQIEMENTVDVYGVVYDLRMHRPLMVQTEDQYVFLNQCVMDIIRSQKEKKTDLIYQNTTAMAIYENFTPGPAFGKANGYHA.

Positions 1–24 (MRRLPLLPPCPLLLLLLLPAEVRC) are cleaved as a signal peptide. Residues 25–1044 (TTACTDDCSL…LPQDPGVIAG (1020 aa)) are Extracellular-facing. Asparagine 36, asparagine 52, asparagine 97, asparagine 103, asparagine 118, asparagine 124, asparagine 186, asparagine 192, asparagine 243, asparagine 275, asparagine 281, asparagine 296, asparagine 302, asparagine 331, asparagine 332, asparagine 364, asparagine 385, asparagine 391, asparagine 453, asparagine 459, asparagine 484, asparagine 500, asparagine 510, asparagine 547, asparagine 568, asparagine 630, asparagine 636, asparagine 651, asparagine 657, asparagine 719, asparagine 745, asparagine 750, asparagine 766, asparagine 776, asparagine 804, and asparagine 828 each carry an N-linked (GlcNAc...) asparagine glycan. A disordered region spans residues 39–72 (EEMGTSSNDELSVNATSGNRRLSEDVSLPGRAMS). Over residues 41-58 (MGTSSNDELSVNATSGNR) the composition is skewed to polar residues. Fibronectin type-III domains follow at residues 82–170 (AVLD…TKPS), 171–259 (PVLD…TKPS), 260–343 (PVLD…SLNL), 346–437 (KPSP…TKPS), 438–523 (PVLD…SLYT), 524–614 (KPTP…TKPR), 615–703 (AVLH…TKPS), 704–793 (MVLN…VPSS), 794–888 (VNAF…TDPP), and 887–979 (PPVP…IVDV). A glycan (N-linked (GlcNAc...) asparagine) is linked at asparagine 1010. The helical transmembrane segment at 1045–1065 (AVIGCLLAILAVVAIGGYIFW) threads the bilayer. Topologically, residues 1066–1406 (RRRRKDKRNT…AFGKANGYHA (341 aa)) are cytoplasmic. The 258-residue stretch at 1110–1367 (FAEEYEELKS…VFLNQCVMDI (258 aa)) folds into the Tyrosine-protein phosphatase domain. Residues aspartate 1274, 1308 to 1314 (CSAGVGR), and glutamine 1352 contribute to the substrate site. The active-site Phosphocysteine intermediate is cysteine 1308.

This sequence belongs to the protein-tyrosine phosphatase family. Receptor class 3 subfamily. In terms of tissue distribution, found on the apical surfaces of retinal Mueller cells, renal tubule cells and intestinal brush border cells.

The protein resides in the cell membrane. The protein localises to the cell projection. It localises to the ruffle membrane. It is found in the cell junction. It carries out the reaction O-phospho-L-tyrosyl-[protein] + H2O = L-tyrosyl-[protein] + phosphate. Its function is as follows. Tyrosine phosphatase which dephosphorylates or contributes to the dephosphorylation of several substrates. Plays a role in cell adhesion, migration, proliferation and differentiation. Has a role in megakaryocytes and platelet formation. May influence the potential of nonsensory supporting cells to either proliferate or differentiate into hair cells. This is Receptor-type tyrosine-protein phosphatase eta (PTPRJ) from Gallus gallus (Chicken).